Here is a 57-residue protein sequence, read N- to C-terminus: Large ribosomal subunit protein bL32 (57 aa).

The protein belongs to the bacterial ribosomal protein bL32 family.

This Bacillus anthracis (strain A0248) protein is Large ribosomal subunit protein bL32.